We begin with the raw amino-acid sequence, 65 residues long: Large ribosomal subunit protein uL30 (65 aa).

Belongs to the universal ribosomal protein uL30 family. In terms of assembly, part of the 50S ribosomal subunit.

The sequence is that of Large ribosomal subunit protein uL30 from Aster yellows witches'-broom phytoplasma (strain AYWB).